A 502-amino-acid polypeptide reads, in one-letter code: Probable malate:quinone oxidoreductase 1 (502 aa).

Belongs to the MQO family. FAD is required as a cofactor.

It carries out the reaction (S)-malate + a quinone = a quinol + oxaloacetate. Its pathway is carbohydrate metabolism; tricarboxylic acid cycle; oxaloacetate from (S)-malate (quinone route): step 1/1. The sequence is that of Probable malate:quinone oxidoreductase 1 from Pseudomonas putida (strain ATCC 47054 / DSM 6125 / CFBP 8728 / NCIMB 11950 / KT2440).